The following is a 644-amino-acid chain: ATP-dependent zinc metalloprotease FtsH (644 aa).

Residues 1 to 4 lie on the Cytoplasmic side of the membrane; the sequence is MAKN. The chain crosses the membrane as a helical span at residues 5 to 25; sequence LILWLVIAVVLMSVFQSFGPS. Residues 26–98 are Periplasmic-facing; it reads ESNGRKVDYS…VGEPPEEPSL (73 aa). A helical transmembrane segment spans residues 99-119; that stretch reads LASIFISWFPMLLLIGVWIFF. Residues 120 to 644 lie on the Cytoplasmic side of the membrane; that stretch reads MRQMQGGGGK…NTMSEQLGDK (525 aa). An ATP-binding site is contributed by 192-199; the sequence is GPPGTGKT. Zn(2+) is bound at residue H414. Residue E415 is part of the active site. The Zn(2+) site is built by H418 and D492. The segment at 598–644 is disordered; sequence VRPPAGWEEPGASNNSGDNGSPKAPRPVDEPRTPNPGNTMSEQLGDK. A compositionally biased stretch (polar residues) spans 632–644; sequence NPGNTMSEQLGDK.

It in the central section; belongs to the AAA ATPase family. This sequence in the C-terminal section; belongs to the peptidase M41 family. As to quaternary structure, homohexamer. Zn(2+) serves as cofactor.

The protein localises to the cell inner membrane. Functionally, acts as a processive, ATP-dependent zinc metallopeptidase for both cytoplasmic and membrane proteins. Plays a role in the quality control of integral membrane proteins. The polypeptide is ATP-dependent zinc metalloprotease FtsH (Shigella flexneri).